The sequence spans 355 residues: Glutamyl aminopeptidase (355 aa).

2 residues coordinate a divalent metal cation: His-65 and Asp-181. Glu-213 serves as the catalytic Proton acceptor. A divalent metal cation contacts are provided by Glu-214, Asp-236, and His-319.

Belongs to the peptidase M42 family. It depends on a divalent metal cation as a cofactor.

The enzyme catalyses Release of N-terminal glutamate (and to a lesser extent aspartate) from a peptide.. The chain is Glutamyl aminopeptidase (pepA) from Lactococcus lactis subsp. cremoris (strain MG1363).